Here is a 116-residue protein sequence, read N- to C-terminus: UPF0298 protein EF_2453 (116 aa).

The protein belongs to the UPF0298 family.

The protein resides in the cytoplasm. The chain is UPF0298 protein EF_2453 from Enterococcus faecalis (strain ATCC 700802 / V583).